The sequence spans 1708 residues: Rapamycin-insensitive companion of mTOR (1708 aa).

An interaction with NBN region spans residues 1 to 789; sequence MAAIGRGRSL…DKANLHALIQ (789 aa). Phosphoserine is present on residues serine 21, serine 35, and serine 265. Lysine 274 participates in a covalent cross-link: Glycyl lysine isopeptide (Lys-Gly) (interchain with G-Cter in ubiquitin). Residues 521-570 are ribosome-binding domain; sequence LKDTEEALLINLRDSQVLQHKENLEWNWNLIGTILKWPNVNLRNYKDEQL. The ATP site is built by asparagine 543, arginine 572, and arginine 576. The disordered stretch occupies residues 1022–1041; sequence LSLNSESTSSRHNSESESVP. N6-acetyllysine occurs at positions 1092 and 1095. At threonine 1103 the chain carries Phosphothreonine. Residues 1103–1134 form a disordered region; it reads TLPNKKHRSSSDPKGGKLSSESKTSNRRIRTL. N6-acetyllysine occurs at positions 1116, 1119, and 1125. Residue threonine 1135 is modified to Phosphothreonine; by RPS6KB1. Serine 1138, serine 1162, and serine 1219 each carry phosphoserine. The interval 1204–1252 is disordered; the sequence is VVESSTSSHMKIRSQSFNTDTTTSGISSMSSSPSRETVGVDATTMDTDC. Polar residues predominate over residues 1206-1221; the sequence is ESSTSSHMKIRSQSFN. The segment covering 1222 to 1240 has biased composition (low complexity); sequence TDTTTSGISSMSSSPSRET. Serine 1235 is subject to Phosphoserine; by GSK3-beta. Threonine 1271 carries the phosphothreonine modification. 4 positions are modified to phosphoserine: serine 1274, serine 1278, serine 1282, and serine 1284. The segment covering 1275–1288 has biased composition (low complexity); the sequence is NHLSLSKSNSVSLV. The segment at 1275–1298 is disordered; the sequence is NHLSLSKSNSVSLVPPGSSHTLPR. Threonine 1295 bears the Phosphothreonine mark. A phosphoserine mark is found at serine 1302 and serine 1313. Threonine 1332 bears the Phosphothreonine mark. A phosphoserine mark is found at serine 1346 and serine 1353. Position 1376 is a phosphothreonine (threonine 1376). Serine 1385 is modified (phosphoserine). At tyrosine 1386 the chain carries Phosphotyrosine. Residues serine 1388, serine 1396, and serine 1411 each carry the phosphoserine modification. Positions 1515, 1520, and 1523 each coordinate Zn(2+). Phosphoserine is present on residues serine 1571, serine 1574, serine 1577, and serine 1591. Zn(2+) is bound at residue cysteine 1651. The residue at position 1695 (threonine 1695) is a Phosphothreonine; by GSK3-alpha and GSK3-beta.

Belongs to the RICTOR family. In terms of assembly, component of the mechanistic target of rapamycin complex 2 (mTORC2), consisting in two heterotretramers composed of MTOR, MLST8, RICTOR and MAPKAP1/SIN1. The mTORC2 core complex associates with PRR5/PROTOR1 and/or PRR5L/PROTOR2. Contrary to mTORC1, mTORC2 does not bind to and is not sensitive to FKBP12-rapamycin. Binds directly to MTOR and PRR5 within the TORC2 complex; interaction with MTOR is enhanced by deubiquitination of RICTOR by USP9X. Interaction with MAPKAP1 is not enhanced by RICTOR deubiquitination by USP9X. Interacts with CCDC28B. Interacts with NBN. Interacts with SIK3. Interacts with NCKAP1L. Interacts with kinases GSK3A and GSK3B; the interactions lead to phosphorylation of RICTOR at Thr-1695 which facilitates its FBXW7-mediated ubiquitination and subsequent degradation. Interacts with FBXW7; the interaction is enhanced by GSK3-mediated phosphorylation of Thr-1695 and results in RICTOR ubiquitination and degradation. Interacts with ARMH4 (via cytoplasmic tail); this interaction bridges ARMH4 to the mTORC2 complex and inhibits the mTORC2 kinase activity. Interacts with UBXN2A. Interacts with TSPAN8. (Microbial infection) Interacts with vaccinia virus protein F17; this interaction dysregulates MTOR. In terms of processing, phosphorylated by MTOR; when part of mTORC2. Phosphorylated at Thr-1135 by RPS6KB1 downstream of the mTORC1 complex: phosphorylation of RICTOR inhibits mTORC2 signaling by creating a binding site for 14-3-3 proteins. Phosphorylated at Thr-1695 by GSK3A and GSK3B which facilitates RICTOR ubiquitination and subsequent degradation. Phosphorylated at Ser-1235 by GSK3B in response to endoplasmic stress, inhibiting mTORC2 signaling. Ubiquitinated by the SCF(FBXW7) complex, leading to its degradation by the proteasome. Deubiquitinated by USP9X; deubiquitination stabilizes RICTOR and enhances its binding to MTOR, thus promoting mTORC2 complex assembly. Post-translationally, acetylated by EP300/p300 in response to glucose, leading to activate the mTORC2 complex. Acetylation by BLOC1S1/GCN5L1 in response to hypotoxic stress protects RICTOR against ubiquitination and subsequent degradation by the proteasome.

It is found in the cell membrane. It localises to the endoplasmic reticulum membrane. The protein resides in the lysosome membrane. Component of the mechanistic target of rapamycin complex 2 (mTORC2), which transduces signals from growth factors to pathways involved in proliferation, cytoskeletal organization, lipogenesis and anabolic output. In response to growth factors, mTORC2 phosphorylates and activates AGC protein kinase family members, including AKT (AKT1, AKT2 and AKT3), PKC (PRKCA, PRKCB and PRKCE) and SGK1. In contrast to mTORC1, mTORC2 is nutrient-insensitive. Within the mTORC2 complex, RICTOR probably acts as a molecular adapter. RICTOR is responsible for the FKBP12-rapamycin-insensitivity of mTORC2. mTORC2 plays a critical role in AKT1 activation by mediating phosphorylation of different sites depending on the context, such as 'Thr-450', 'Ser-473', 'Ser-477' or 'Thr-479', facilitating the phosphorylation of the activation loop of AKT1 on 'Thr-308' by PDPK1/PDK1 which is a prerequisite for full activation. mTORC2 catalyzes the phosphorylation of SGK1 at 'Ser-422' and of PRKCA on 'Ser-657'. The mTORC2 complex also phosphorylates various proteins involved in insulin signaling, such as FBXW8 and IGF2BP1. mTORC2 acts upstream of Rho GTPases to regulate the actin cytoskeleton, probably by activating one or more Rho-type guanine nucleotide exchange factors. mTORC2 promotes the serum-induced formation of stress-fibers or F-actin. This is Rapamycin-insensitive companion of mTOR from Homo sapiens (Human).